Consider the following 48-residue polypeptide: ATP synthase protein 8 (48 aa).

Residues Leu4–Leu24 form a helical membrane-spanning segment.

It belongs to the ATPase protein 8 family. As to quaternary structure, F-type ATPases have 2 components, CF(1) - the catalytic core - and CF(0) - the membrane proton channel.

The protein resides in the mitochondrion membrane. Its function is as follows. Mitochondrial membrane ATP synthase (F(1)F(0) ATP synthase or Complex V) produces ATP from ADP in the presence of a proton gradient across the membrane which is generated by electron transport complexes of the respiratory chain. F-type ATPases consist of two structural domains, F(1) - containing the extramembraneous catalytic core and F(0) - containing the membrane proton channel, linked together by a central stalk and a peripheral stalk. During catalysis, ATP synthesis in the catalytic domain of F(1) is coupled via a rotary mechanism of the central stalk subunits to proton translocation. Part of the complex F(0) domain. Minor subunit located with subunit a in the membrane. The chain is ATP synthase protein 8 (atp8) from Schizosaccharomyces pombe (strain 972 / ATCC 24843) (Fission yeast).